The sequence spans 272 residues: Shikimate dehydrogenase (NADP(+)) (272 aa).

Residues 14–16 and T61 contribute to the shikimate site; that span reads SKS. K65 (proton acceptor) is an active-site residue. E77 contacts NADP(+). Residues N86 and D102 each contribute to the shikimate site. Residues 126–130, 149–154, and M213 contribute to the NADP(+) site; these read GAGGA and NRTVSR. Residue Y215 coordinates shikimate. G237 is a binding site for NADP(+).

Belongs to the shikimate dehydrogenase family. As to quaternary structure, homodimer.

The enzyme catalyses shikimate + NADP(+) = 3-dehydroshikimate + NADPH + H(+). The protein operates within metabolic intermediate biosynthesis; chorismate biosynthesis; chorismate from D-erythrose 4-phosphate and phosphoenolpyruvate: step 4/7. Involved in the biosynthesis of the chorismate, which leads to the biosynthesis of aromatic amino acids. Catalyzes the reversible NADPH linked reduction of 3-dehydroshikimate (DHSA) to yield shikimate (SA). The chain is Shikimate dehydrogenase (NADP(+)) from Escherichia coli O45:K1 (strain S88 / ExPEC).